Here is a 95-residue protein sequence, read N- to C-terminus: DNA-directed RNA polymerase subunit Rpo11 (95 aa).

This sequence belongs to the archaeal Rpo11/eukaryotic RPB11/RPC19 RNA polymerase subunit family. As to quaternary structure, part of the RNA polymerase complex.

It localises to the cytoplasm. The catalysed reaction is RNA(n) + a ribonucleoside 5'-triphosphate = RNA(n+1) + diphosphate. Its function is as follows. DNA-dependent RNA polymerase (RNAP) catalyzes the transcription of DNA into RNA using the four ribonucleoside triphosphates as substrates. This is DNA-directed RNA polymerase subunit Rpo11 from Pyrococcus abyssi (strain GE5 / Orsay).